A 604-amino-acid polypeptide reads, in one-letter code: Elongation factor 4 (604 aa).

The tr-type G domain maps to S7–A189. GTP-binding positions include D19–T24 and N136–D139.

It belongs to the TRAFAC class translation factor GTPase superfamily. Classic translation factor GTPase family. LepA subfamily.

It localises to the cell inner membrane. It catalyses the reaction GTP + H2O = GDP + phosphate + H(+). In terms of biological role, required for accurate and efficient protein synthesis under certain stress conditions. May act as a fidelity factor of the translation reaction, by catalyzing a one-codon backward translocation of tRNAs on improperly translocated ribosomes. Back-translocation proceeds from a post-translocation (POST) complex to a pre-translocation (PRE) complex, thus giving elongation factor G a second chance to translocate the tRNAs correctly. Binds to ribosomes in a GTP-dependent manner. The chain is Elongation factor 4 from Prochlorococcus marinus (strain MIT 9303).